We begin with the raw amino-acid sequence, 429 residues long: Histidinol dehydrogenase (429 aa).

3 residues coordinate NAD(+): Tyr127, Gln188, and Asn211. Positions 234, 256, and 259 each coordinate substrate. Zn(2+) is bound by residues Gln256 and His259. Active-site proton acceptor residues include Glu324 and His325. Residues His325, Asp358, Glu412, and His417 each contribute to the substrate site. Asp358 contributes to the Zn(2+) binding site. Residue His417 participates in Zn(2+) binding.

The protein belongs to the histidinol dehydrogenase family. The cofactor is Zn(2+).

The catalysed reaction is L-histidinol + 2 NAD(+) + H2O = L-histidine + 2 NADH + 3 H(+). It functions in the pathway amino-acid biosynthesis; L-histidine biosynthesis; L-histidine from 5-phospho-alpha-D-ribose 1-diphosphate: step 9/9. Functionally, catalyzes the sequential NAD-dependent oxidations of L-histidinol to L-histidinaldehyde and then to L-histidine. The chain is Histidinol dehydrogenase from Bacillus thuringiensis subsp. konkukian (strain 97-27).